Here is a 464-residue protein sequence, read N- to C-terminus: Protein FAM90A10 (464 aa).

Disordered stretches follow at residues 1 to 42 (MMAR…DPRL), 69 to 373 (VPAT…LPTA), and 415 to 437 (HSPE…SEAP). Composition is skewed to basic and acidic residues over residues 74-89 (GKKE…KPRG) and 97-114 (NKDK…DPQR). The span at 180–197 (LASLSPLRKASLSSSSSL) shows a compositional bias: low complexity.

This sequence belongs to the FAM90 family.

The chain is Protein FAM90A10 (FAM90A10) from Homo sapiens (Human).